Reading from the N-terminus, the 718-residue chain is Ribosomal RNA large subunit methyltransferase K/L (718 aa).

The THUMP domain maps to 43–154; the sequence is TQYRILLWSR…QDELVVSLDL (112 aa).

Belongs to the methyltransferase superfamily. RlmKL family.

It localises to the cytoplasm. It catalyses the reaction guanosine(2445) in 23S rRNA + S-adenosyl-L-methionine = N(2)-methylguanosine(2445) in 23S rRNA + S-adenosyl-L-homocysteine + H(+). It carries out the reaction guanosine(2069) in 23S rRNA + S-adenosyl-L-methionine = N(2)-methylguanosine(2069) in 23S rRNA + S-adenosyl-L-homocysteine + H(+). Functionally, specifically methylates the guanine in position 2445 (m2G2445) and the guanine in position 2069 (m7G2069) of 23S rRNA. The sequence is that of Ribosomal RNA large subunit methyltransferase K/L from Histophilus somni (strain 2336) (Haemophilus somnus).